The following is a 185-amino-acid chain: Adenine phosphoribosyltransferase (185 aa).

The protein belongs to the purine/pyrimidine phosphoribosyltransferase family. In terms of assembly, homodimer.

The protein localises to the cytoplasm. It carries out the reaction AMP + diphosphate = 5-phospho-alpha-D-ribose 1-diphosphate + adenine. It participates in purine metabolism; AMP biosynthesis via salvage pathway; AMP from adenine: step 1/1. Functionally, catalyzes a salvage reaction resulting in the formation of AMP, that is energically less costly than de novo synthesis. The sequence is that of Adenine phosphoribosyltransferase from Shewanella denitrificans (strain OS217 / ATCC BAA-1090 / DSM 15013).